The following is a 61-amino-acid chain: Photosystem II reaction center protein Z (61 aa).

Helical transmembrane passes span 5-25 (LTAL…VALA) and 38-58 (NKAF…DGIS).

Belongs to the PsbZ family. PSII is composed of 1 copy each of membrane proteins PsbA, PsbB, PsbC, PsbD, PsbE, PsbF, PsbH, PsbI, PsbJ, PsbK, PsbL, PsbM, PsbT, PsbX, PsbY, PsbZ, Psb30/Ycf12, at least 3 peripheral proteins of the oxygen-evolving complex and a large number of cofactors. It forms dimeric complexes.

Its subcellular location is the plastid. The protein localises to the chloroplast thylakoid membrane. Functionally, may control the interaction of photosystem II (PSII) cores with the light-harvesting antenna, regulates electron flow through the 2 photosystem reaction centers. PSII is a light-driven water plastoquinone oxidoreductase, using light energy to abstract electrons from H(2)O, generating a proton gradient subsequently used for ATP formation. The sequence is that of Photosystem II reaction center protein Z from Skeletonema costatum (Marine centric diatom).